The sequence spans 87 residues: uncharacterized protein (87 aa).

Residues 13 to 33 form a helical membrane-spanning segment; the sequence is LMIVSAVFGGIGIITTIVFVI. Positions 66–87 are disordered; the sequence is EECGGSTETSSSKPKKKAKKEV. A compositionally biased stretch (basic residues) spans 78–87; that stretch reads KPKKKAKKEV.

It is found in the membrane. This is an uncharacterized protein from Caenorhabditis elegans.